We begin with the raw amino-acid sequence, 473 residues long: UTP--glucose-1-phosphate uridylyltransferase (473 aa).

Residues 89 to 92 (LNGG), Lys103, Gln166, and Gly195 contribute to the UTP site. 91-92 (GG) provides a ligand contact to substrate. Substrate-binding positions include His196 and 224–226 (NSD). Residues Asp226 and Lys364 each coordinate UTP.

This sequence belongs to the UDPGP type 1 family.

Its subcellular location is the cytoplasm. The catalysed reaction is alpha-D-glucose 1-phosphate + UTP + H(+) = UDP-alpha-D-glucose + diphosphate. In terms of biological role, plays a central role as a glucosyl donor in cellular metabolic pathways. In Hordeum vulgare (Barley), this protein is UTP--glucose-1-phosphate uridylyltransferase.